Here is a 313-residue protein sequence, read N- to C-terminus: Porphobilinogen deaminase (313 aa).

Cys242 is subject to S-(dipyrrolylmethanemethyl)cysteine.

This sequence belongs to the HMBS family. In terms of assembly, monomer. Dipyrromethane is required as a cofactor.

It catalyses the reaction 4 porphobilinogen + H2O = hydroxymethylbilane + 4 NH4(+). It participates in porphyrin-containing compound metabolism; protoporphyrin-IX biosynthesis; coproporphyrinogen-III from 5-aminolevulinate: step 2/4. Tetrapolymerization of the monopyrrole PBG into the hydroxymethylbilane pre-uroporphyrinogen in several discrete steps. This Klebsiella pneumoniae (strain 342) protein is Porphobilinogen deaminase.